Reading from the N-terminus, the 192-residue chain is Probable cobalt-precorrin-6B C(15)-methyltransferase (decarboxylating) (192 aa).

Residues Thr20, 44–48 (GSGTG), Glu68, and Ala96 contribute to the S-adenosyl-L-methionine site.

Belongs to the methyltransferase superfamily. Archaeal-type CbiT family.

It catalyses the reaction Co-precorrin-6B + S-adenosyl-L-methionine = Co-precorrin-7 + S-adenosyl-L-homocysteine + CO2. Its pathway is cofactor biosynthesis; adenosylcobalamin biosynthesis; cob(II)yrinate a,c-diamide from sirohydrochlorin (anaerobic route): step 8/10. Functionally, catalyzes the methylation of C-15 in cobalt-precorrin-6B followed by the decarboxylation of C-12 to form cobalt-precorrin-7. The sequence is that of Probable cobalt-precorrin-6B C(15)-methyltransferase (decarboxylating) from Sulfurisphaera tokodaii (strain DSM 16993 / JCM 10545 / NBRC 100140 / 7) (Sulfolobus tokodaii).